The following is a 230-amino-acid chain: Sugar fermentation stimulation protein homolog (230 aa).

The protein belongs to the SfsA family.

The sequence is that of Sugar fermentation stimulation protein homolog from Clostridium botulinum (strain ATCC 19397 / Type A).